The following is a 70-amino-acid chain: Protein SlyX homolog (70 aa).

It belongs to the SlyX family.

This chain is Protein SlyX homolog, found in Agrobacterium fabrum (strain C58 / ATCC 33970) (Agrobacterium tumefaciens (strain C58)).